Here is a 267-residue protein sequence, read N- to C-terminus: 4-hydroxy-2-oxo-heptane-1,7-dioate aldolase (267 aa).

Histidine 45 functions as the Proton acceptor in the catalytic mechanism. A substrate-binding site is contributed by glutamine 147. Glutamate 149 contacts a divalent metal cation. 2 residues coordinate substrate: alanine 174 and aspartate 175. A divalent metal cation is bound at residue aspartate 175.

The protein belongs to the HpcH/HpaI aldolase family. As to quaternary structure, homohexamer; trimer of dimers. The cofactor is a divalent metal cation.

The enzyme catalyses 4-hydroxy-2-oxoheptanedioate = succinate semialdehyde + pyruvate. The protein operates within aromatic compound metabolism; 4-hydroxyphenylacetate degradation; pyruvate and succinate semialdehyde from 4-hydroxyphenylacetate: step 7/7. Its function is as follows. Catalyzes the reversible retro-aldol cleavage of 4-hydroxy-2-ketoheptane-1,7-dioate (HKHD) to pyruvate and succinic semialdehyde. The chain is 4-hydroxy-2-oxo-heptane-1,7-dioate aldolase from Shigella flexneri.